Reading from the N-terminus, the 273-residue chain is Formamidopyrimidine-DNA glycosylase (273 aa).

P2 (schiff-base intermediate with DNA) is an active-site residue. The Proton donor role is filled by E3. The active-site Proton donor; for beta-elimination activity is the K58. DNA is bound by residues H92, R111, and K153. Residues 238-272 form an FPG-type zinc finger; that stretch reads KVYGREGQSCLSCSSTIIKIKHSGRSTFYCKTCQY. R262 (proton donor; for delta-elimination activity) is an active-site residue.

The protein belongs to the FPG family. As to quaternary structure, monomer. Zn(2+) is required as a cofactor.

The enzyme catalyses Hydrolysis of DNA containing ring-opened 7-methylguanine residues, releasing 2,6-diamino-4-hydroxy-5-(N-methyl)formamidopyrimidine.. The catalysed reaction is 2'-deoxyribonucleotide-(2'-deoxyribose 5'-phosphate)-2'-deoxyribonucleotide-DNA = a 3'-end 2'-deoxyribonucleotide-(2,3-dehydro-2,3-deoxyribose 5'-phosphate)-DNA + a 5'-end 5'-phospho-2'-deoxyribonucleoside-DNA + H(+). Its function is as follows. Involved in base excision repair of DNA damaged by oxidation or by mutagenic agents. Acts as a DNA glycosylase that recognizes and removes damaged bases. Has a preference for oxidized purines, such as 7,8-dihydro-8-oxoguanine (8-oxoG). Has AP (apurinic/apyrimidinic) lyase activity and introduces nicks in the DNA strand. Cleaves the DNA backbone by beta-delta elimination to generate a single-strand break at the site of the removed base with both 3'- and 5'-phosphates. The protein is Formamidopyrimidine-DNA glycosylase of Rickettsia peacockii (strain Rustic).